The primary structure comprises 690 residues: Protease 2 (690 aa).

Catalysis depends on charge relay system residues Ser-534, Asp-619, and His-654.

It belongs to the peptidase S9A family.

The enzyme catalyses Hydrolysis of -Arg-|-Xaa- and -Lys-|-Xaa- bonds in oligopeptides, even when P1' residue is proline.. Cleaves peptide bonds on the C-terminal side of lysyl and argininyl residues. The chain is Protease 2 (ptrB) from Moraxella lacunata.